Reading from the N-terminus, the 851-residue chain is Thrombospondin type-1 domain-containing protein 1 (851 aa).

Residues Met1–Ala24 form the signal peptide. The Extracellular portion of the chain corresponds to Glu25–Asn412. Asn53, Asn58, Asn69, Asn110, Asn135, and Asn304 each carry an N-linked (GlcNAc...) asparagine glycan. The TSP type-1 domain maps to Ile339–Ala392. 3 disulfide bridges follow: Cys351–Cys386, Cys355–Cys391, and Cys366–Cys376. The helical transmembrane segment at Val413–Thr433 threads the bilayer. The Cytoplasmic portion of the chain corresponds to Leu434–Ile851. Ser462 bears the Phosphoserine mark. 3 disordered regions span residues Ser471–Gln516, Lys626–Ser646, and Ser682–Ile777. The segment covering Arg685 to Arg695 has biased composition (basic and acidic residues). Polar residues predominate over residues Ser765–Pro776.

In terms of assembly, part of a complex composed of THSD1, PTK2/FAK1, TLN1 and VCL. Interacts with TLN1. Expressed in cerebral vascular endothelium.

It is found in the endosome membrane. It localises to the cell junction. The protein resides in the focal adhesion. Is a positive regulator of nascent focal adhesion assembly, involved in the modulation of endothelial cell attachment to the extracellular matrix. The polypeptide is Thrombospondin type-1 domain-containing protein 1 (Thsd1) (Mus musculus (Mouse)).